The following is a 95-amino-acid chain: 6 kDa early secretory antigenic target homolog (95 aa).

This sequence belongs to the WXG100 family. ESAT-6 subfamily. As to quaternary structure, forms a tight 1:1 complex with EsxB.

The protein localises to the secreted. Its function is as follows. A secreted protein that might play a role in virulence. This Mycobacterium leprae (strain TN) protein is 6 kDa early secretory antigenic target homolog (esxA).